The sequence spans 381 residues: Cytochrome b (381 aa).

Transmembrane regions (helical) follow at residues 34 to 54, 78 to 99, 114 to 134, and 179 to 199; these read FGSL…FLAM, WLIR…YLHI, WNIG…GYVL, and FFAF…IHLL. Residues H84 and H98 each contribute to the heme b site. Heme b is bound by residues H183 and H197. An a ubiquinone-binding site is contributed by H202. A run of 4 helical transmembrane segments spans residues 227 to 247, 289 to 309, 321 to 341, and 348 to 368; these read YKDL…ALFM, LGGV…PLLH, LTQI…WIGG, and FITV…IIMP.

The protein belongs to the cytochrome b family. The cytochrome bc1 complex contains 3 respiratory subunits (MT-CYB, CYC1 and UQCRFS1), 2 core proteins (UQCRC1 and UQCRC2) and probably 6 low-molecular weight proteins. The cofactor is heme b.

It localises to the mitochondrion inner membrane. Component of the ubiquinol-cytochrome c reductase complex (complex III or cytochrome b-c1 complex) that is part of the mitochondrial respiratory chain. The b-c1 complex mediates electron transfer from ubiquinol to cytochrome c. Contributes to the generation of a proton gradient across the mitochondrial membrane that is then used for ATP synthesis. This chain is Cytochrome b (mt-cyb), found in Sphyrna tiburo vespertina (Pacific bonnethead shark).